A 337-amino-acid chain; its full sequence is MAVKVGINGFGRIGRIVLRNALLNPEVNVVAVNDPFIALEYMVYMFKYDSVHGRFKGTVETKGGKLIVDGKEISVFGEKDAGAIPWSSVGAEYIVESTGVFTTIEKASAHLKGGAKKVIISAPSADAPMYVCGVNLDSYDSQHAVISNASCTTNCLAPLAKVIHDKFGIVEALMTTVHATTATQKTVDGPSNKDWRGGRSVNGNIIPSSTGAAKAVGKVIPSLNGKLTGLAFRVPTLDVSVVDLVCRTEKSATYDEIKAAVKEASKGPLKGILGYTEDHVVSTDFIGDNHSSIFDATAGIQLNKNFVKLIAWYDNEWGYSGRVVDLLVFAAKKDGAL.

NAD(+)-binding positions include 12–13 (RI), D34, and K79. Residues 150–152 (SCT), T181, 210–211 (TG), and R233 each bind D-glyceraldehyde 3-phosphate. Catalysis depends on C151, which acts as the Nucleophile. N315 contacts NAD(+).

It belongs to the glyceraldehyde-3-phosphate dehydrogenase family. In terms of assembly, homotetramer. Expressed in all tissues examined.

It localises to the cytoplasm. It carries out the reaction D-glyceraldehyde 3-phosphate + phosphate + NAD(+) = (2R)-3-phospho-glyceroyl phosphate + NADH + H(+). Its pathway is carbohydrate degradation; glycolysis; pyruvate from D-glyceraldehyde 3-phosphate: step 1/5. In Lentinula edodes (Shiitake mushroom), this protein is Glyceraldehyde-3-phosphate dehydrogenase (gpd).